Here is a 225-residue protein sequence, read N- to C-terminus: Heptaprenylglyceryl phosphate synthase (225 aa).

Lys6 contributes to the sn-glycerol 1-phosphate binding site. Residues Asp8 and Thr34 each coordinate Mg(2+). Sn-glycerol 1-phosphate is bound by residues 153-158 (YVEYSG), Gly183, and 203-204 (GN).

The protein belongs to the GGGP/HepGP synthase family. Group I subfamily. As to quaternary structure, homodimer. The cofactor is Mg(2+).

It catalyses the reaction sn-glycerol 1-phosphate + all-trans-heptaprenyl diphosphate = 3-heptaprenyl-sn-glycero-1-phosphate + diphosphate. It functions in the pathway membrane lipid metabolism; glycerophospholipid metabolism. Functionally, prenyltransferase that catalyzes in vivo the transfer of the heptaprenyl moiety of heptaprenyl pyrophosphate (HepPP; 35 carbon atoms) to the C3 hydroxyl of sn-glycerol-1-phosphate (G1P), producing heptaprenylglyceryl phosphate (HepGP). This reaction is an ether-bond-formation step in the biosynthesis of archaea-type G1P-based membrane lipids found in Bacillales. The protein is Heptaprenylglyceryl phosphate synthase of Listeria monocytogenes serotype 4b (strain F2365).